The sequence spans 512 residues: Bestrophin-2 (512 aa).

The Cytoplasmic portion of the chain corresponds to 1–31; it reads MTVTYTARVAKARFGGFSKLLLLWRGSIYKL. Ala10 lines the Ca(2+) pocket. The chain crosses the membrane as a helical span at residues 32 to 51; sequence LWRELLCFLGLFMALSAAYR. The Extracellular portion of the chain corresponds to 52 to 60; sequence FVLTEEQKR. Residues 61-82 form a helical membrane-spanning segment; sequence YFEKLVLYCDRYASLIPVSFVL. The Cytoplasmic segment spans residues 83 to 238; it reads GFYVTLVVHR…WISVPLVYTQ (156 aa). Residues 239-255 traverse the membrane as a helical segment; the sequence is VVTIAVYSYFLACLIGR. Residues 256-274 are Extracellular-facing; the sequence is QFLDPAQGYKDHDLDLCVP. A helical membrane pass occupies residues 275–288; the sequence is IFTLLQFFFYAGWL. Residues 289–512 are Cytoplasmic-facing; it reads KVAEQLINPF…PIGEEEESLA (224 aa). Positions 293, 296, 301, and 304 each coordinate Ca(2+). The tract at residues 453 to 512 is disordered; it reads VDLGQPEPESEPITGPESPALVPAPRAPSEPLTVVPLSGTRGPAPPWLPSPIGEEEESLA.

The protein belongs to the anion channel-forming bestrophin (TC 1.A.46) family. Calcium-sensitive chloride channel subfamily. Pentamer. Interacts with GLUL; this interaction tethers a fraction of GLUL to the membrane, causing a decrease of cytosolic glutamine synthase (GS) activity and inhibits the chloride channel activity of BEST2 by affecting the gating at the aperture in the absence of intracellular glutamate.

The protein localises to the cell membrane. It localises to the basolateral cell membrane. It catalyses the reaction chloride(in) = chloride(out). The enzyme catalyses iodide(out) = iodide(in). It carries out the reaction hydrogencarbonate(in) = hydrogencarbonate(out). The catalysed reaction is L-glutamate(out) = L-glutamate(in). It catalyses the reaction L-glutamine(out) = L-glutamine(in). With respect to regulation, chloride channel activity is allosterically inhibited by GLUL/glutamine synthase (GS) which affects the gating at the aperture in the absence of intracellular glutamate. Inhibitory effect of GLUL is relieved upon increasing of intracellular level of L-glutamate. Its function is as follows. Ligand-gated anion channel that allows the movement of anions across cell membranes when activated by calcium (Ca2+). Transports a large specter of anions, namely mediates the movement of chloride, L-glutamate and iodide. Calcium-binding triggers the dilation of the aperture, but calcium-dependent gating is only effective when the size of the passing anion is bigger than the closed aperture. Mediates the calcium-activated hydrogencarbonate movement and participates in colonic hydrogencarbonate secretion concomitant with mucin secretion. In non-pigmented epithelium (NPE), mediates the efflux of intracellular L-glutamate; binding of intracellular L-glutamate activates and open both the neck and the aperture of the channel, leading to L-glutamate exit promoting chloride influx movement from the extracellular side in trans. Also exhibits a directional permeability for intracellular glutamine, in a similar manner as for L-glutamate. This Bos taurus (Bovine) protein is Bestrophin-2.